Reading from the N-terminus, the 620-residue chain is Chaperone protein HscA homolog (620 aa).

It belongs to the heat shock protein 70 family.

Its function is as follows. Chaperone involved in the maturation of iron-sulfur cluster-containing proteins. Has a low intrinsic ATPase activity which is markedly stimulated by HscB. The sequence is that of Chaperone protein HscA homolog from Neisseria meningitidis serogroup A / serotype 4A (strain DSM 15465 / Z2491).